We begin with the raw amino-acid sequence, 203 residues long: Sporulation delaying protein C (203 aa).

An N-terminal signal peptide occupies residues 1 to 32; it reads MKSKLLRLLIVSMVTILVFSLVGLSKESSTSA. Positions 33–140 are cleaved as a propeptide — removed in mature form; that stretch reads KENHTFSGED…KYSSNKVTPS (108 aa). The cysteines at positions 141 and 147 are disulfide-linked. The propeptide at 183–203 is removed in mature form; the sequence is SASNNSDLEAAAAKTLKLIHQ.

Proprotein probably interacts with chaperone CsaA. Post-translationally, production of active SDP (able to induce SdpI and kill cells) is a multi-step process that requires signal peptide cleavage (probably by SipS or SipT) as well as SdpA and SdpB. The disulfide bond is not required for maximum toxicity.

It is found in the secreted. In terms of biological role, produces a 42-residue extracellular sporulation delaying protein (SDP) that collapses the proton motive force (probably both the membrane potential and pH gradient) across the cell membrane, which leads to autolysis; may form a proton channel. Induces the lysis of other B.subtilis cells that have not entered the sporulation pathway, inducing cannibalism to provide a source of nutrients to support sporulation, and at the same time delaying commitment to the energetically expensive and irreversible onset of sporulation. Addition of SDP to liquid cultures halts growth, leads to increased cell permeability and eventually cell lysis in a significant subset of the population, although some cells survive and resume growth after a lag period. Effects of SDP are irreversible within 10 minutes. Addition of SDP to solid cultures induces killing, it is much more effective than SKF (AC O31422). Has antibiotic action against Gram-positive Firmicutes (L.acidophilus, M.megaterium, P.polymyxa, S.aureus, S.epidermidis) but not Actinobacteria M.luteus or Gram-negative P.aeruginosa or K.pneumoniae. SDP induces expression of the sdpR-sdpI operon. Its maturation is dependent on SdpA and SdpB. Also functions as a ligand, binds to SdpI triggering a signal transduction cascade that protects the cell against the toxic effects of its own SDP. This is Sporulation delaying protein C from Bacillus subtilis (strain 168).